Here is a 1260-residue protein sequence, read N- to C-terminus: MVVMLRYVWPLLLCSPCLLIQIPDEYKGHHVLEPPVITEQSPRRLVVFPTDDISLKCEARGRPQVEFRWTKDGIHFKPKEELGVVVHEAPYSGSFTIEGNNSFAQRFQGIYRCYASNKLGTAMSHEIQLVAEGAPKWPKETVKPVEVEEGESVVLPCNPPPSAAPPRIYWMNSKIFDIKQDERVSMGQNGDLYFANVLTSDNHSDYICNAHFPGTRTIIQKEPIDLRVKPTNSMIDRKPRLLFPTNSSSRLVALQGQSLILECIAEGFPTPTIKWLHPSDPMPTDRVIYQNHNKTLQLLNVGEEDDGEYTCLAENSLGSARHAYYVTVEAAPYWLQKPQSHLYGPGETARLDCQVQGRPQPEITWRINGMSMETVNKDQKYRIEQGSLILSNVQPTDTMVTQCEARNQHGLLLANAYIYVVQLPARILTKDNQTYMAVEGSTAYLLCKAFGAPVPSVQWLDEEGTTVLQDERFFPYANGTLSIRDLQANDTGRYFCQAANDQNNVTILANLQVKEATQITQGPRSAIEKKGARVTFTCQASFDPSLQASITWRGDGRDLQERGDSDKYFIEDGKLVIQSLDYSDQGNYSCVASTELDEVESRAQLLVVGSPGPVPHLELSDRHLLKQSQVHLSWSPAEDHNSPIEKYDIEFEDKEMAPEKWFSLGKVPGNQTSTTLKLSPYVHYTFRVTAINKYGPGEPSPVSESVVTPEAAPEKNPVDVRGEGNETNNMVITWKPLRWMDWNAPQIQYRVQWRPQGKQETWRKQTVSDPFLVVSNTSTFVPYEIKVQAVNNQGKGPEPQVTIGYSGEDYPQVSPELEDITIFNSSTVLVRWRPVDLAQVKGHLKGYNVTYWWKGSQRKHSKRHIHKSHIVVPANTTSAILSGLRPYSSYHVEVQAFNGRGLGPASEWTFSTPEGVPGHPEALHLECQSDTSLLLHWQPPLSHNGVLTGYLLSYHPVEGESKEQLFFNLSDPELRTHNLTNLNPDLQYRFQLQATTQQGGPGEAIVREGGTMALFGKPDFGNISATAGENYSVVSWVPRKGQCNFRFHILFKALPEGKVSPDHQPQPQYVSYNQSSYTQWNLQPDTKYEIHLIKEKVLLHHLDVKTNGTGPVRVSTTGSFASEGWFIAFVSAIILLLLILLILCFIKRSKGGKYSVKDKEDTQVDSEARPMKDETFGEYRSLESDNEEKAFGSSQPSLNGDIKPLGSDDSLADYGGSVDVQFNEDGSFIGQYSGKKEKEAAGGNDSSGATSPINPAVALE.

The N-terminal stretch at 1-19 (MVVMLRYVWPLLLCSPCLL) is a signal peptide. At 20-1123 (IQIPDEYKGH…VSTTGSFASE (1104 aa)) the chain is on the extracellular side. Ig-like C2-type domains follow at residues 35–130 (PVIT…IQLV), 138–225 (PKET…EPID), 239–327 (PRLL…YYVT), 332–419 (PYWL…AYIY), 424–506 (PARI…NNVT), and 517–600 (TQIT…DEVE). Intrachain disulfides connect Cys-57–Cys-113 and Cys-157–Cys-208. N-linked (GlcNAc...) asparagine glycosylation is found at Asn-100, Asn-202, Asn-246, and Asn-293. Intrachain disulfides connect Cys-263–Cys-311 and Cys-353–Cys-403. N-linked (GlcNAc...) asparagine glycans are attached at residues Asn-432, Asn-478, Asn-489, and Asn-504. Residues Cys-447 and Cys-496 are joined by a disulfide bond. The cysteines at positions 538 and 590 are disulfide-linked. 2 short sequence motifs (cell attachment site) span residues 553-555 (RGD) and 562-564 (RGD). Residues Asn-587 and Asn-670 are each glycosylated (N-linked (GlcNAc...) asparagine). Fibronectin type-III domains follow at residues 613–711 (PVPH…TPEA), 716–809 (NPVD…SGED), 811–916 (PQVS…PEGV), 919–1015 (HPEA…MALF), and 1014–1112 (LFGK…TGPV). The disordered stretch occupies residues 697–724 (GEPSPVSESVVTPEAAPEKNPVDVRGEG). The segment covering 712-724 (APEKNPVDVRGEG) has biased composition (basic and acidic residues). N-linked (GlcNAc...) asparagine glycosylation is found at Asn-725, Asn-776, Asn-824, Asn-848, Asn-875, Asn-968, Asn-978, Asn-1022, Asn-1030, Asn-1073, and Asn-1107. A helical transmembrane segment spans residues 1124 to 1146 (GWFIAFVSAIILLLLILLILCFI). Residues 1147 to 1260 (KRSKGGKYSV…SPINPAVALE (114 aa)) lie on the Cytoplasmic side of the membrane. 7 positions are modified to phosphoserine: Ser-1166, Ser-1181, Ser-1184, Ser-1197, Ser-1246, Ser-1247, and Ser-1251. 2 disordered regions span residues 1183–1210 (ESDN…SDDS) and 1229–1260 (IGQY…VALE). Residues 1244 to 1253 (NDSSGATSPI) show a composition bias toward polar residues.

The protein belongs to the immunoglobulin superfamily. L1/neurofascin/NgCAM family. In terms of assembly, interacts with SHTN1; the interaction occurs in axonal growth cones. Interacts with isoform 2 of BSG. Expressed in the brain, including in the molecular layer of the cerebellar cortex, the fiber-rich layers of the hippocampus (alveus, and strata lacunosum moleculare, radiatum, and oriens), the nerve fiber layer and the inner and outer plexiform layers of the retina, and in the molecular layer of the olfactory bulb (at protein level).

It is found in the cell membrane. It localises to the cell projection. Its subcellular location is the growth cone. Its function is as follows. Neural cell adhesion molecule involved in the dynamics of cell adhesion and in the generation of transmembrane signals at tyrosine kinase receptors. During brain development, critical in multiple processes, including neuronal migration, axonal growth and fasciculation, and synaptogenesis. In the mature brain, plays a role in the dynamics of neuronal structure and function, including synaptic plasticity. In Mus musculus (Mouse), this protein is Neural cell adhesion molecule L1 (L1cam).